The following is an 84-amino-acid chain: Acetylcholine receptor subunit alpha (84 aa).

Cystine bridges form between C7-C21 and C71-C72. A glycan (N-linked (GlcNAc...) asparagine) is linked at N20.

Belongs to the ligand-gated ion channel (TC 1.A.9) family. Acetylcholine receptor (TC 1.A.9.1) subfamily. Alpha-1/CHRNA1 sub-subfamily. In terms of assembly, one of the alpha chains that assemble within the acetylcholine receptor, a pentamer of two alpha chains, a beta, a delta, and a gamma (in immature muscle) or epsilon (in mature muscle) chains. The muscle heteropentamer composed of alpha-1, beta-1, delta, epsilon subunits interacts with the alpha-conotoxin ImII.

It is found in the postsynaptic cell membrane. The protein resides in the cell membrane. The catalysed reaction is K(+)(in) = K(+)(out). It catalyses the reaction Na(+)(in) = Na(+)(out). In terms of biological role, upon acetylcholine binding, the AChR responds by an extensive change in conformation that affects all subunits and leads to opening of an ion-conducting channel across the plasma membrane. In Crocidura russula (Greater white-toothed shrew), this protein is Acetylcholine receptor subunit alpha (CHRNA1).